The chain runs to 376 residues: DNA repair protein RAD51 homolog 3 (376 aa).

The interval Met-1–Ala-126 is required for Holliday junction resolution activity. Ser-20 bears the Phosphoserine mark. The interaction with RAD51B, RAD51D and XRCC3 stretch occupies residues Ser-79–Met-136. Gly-125 to Thr-132 is a binding site for ATP. The short motif at Arg-366–Arg-370 is the Nuclear localization signal element.

The protein belongs to the RecA family. RAD51 subfamily. In terms of assembly, part of the RAD51 paralog protein complexes BCDX2 and CX3; the complexes have a ring-like structure arranged into a flat disc around a central channel. The BCDX2 complex consits of RAD51B, RAD51C, RAD51D and XRCC2; the CX3 complex consists of RAD51C and XRCC3. The BCDX2 subcomplex RAD51B:RAD51C interacts with RAD51. Interacts with SWSAP1; involved in homologous recombination repair. Interacts directly with PALB2 which may serve as a scaffold for a HR complex containing PALB2, BRCA2, RAD51C, RAD51 and XRCC3. Interacts with HELQ. Interacts with DNA damage up-regulated protein DDUP. In terms of tissue distribution, expressed in a variety of tissues, with highest expression in testis, heart muscle, spleen and prostate.

It is found in the nucleus. The protein localises to the cytoplasm. It localises to the perinuclear region. Its subcellular location is the mitochondrion. Its function is as follows. Essential for the homologous recombination (HR) pathway of DNA repair. Involved in the homologous recombination repair (HRR) pathway of double-stranded DNA breaks arising during DNA replication or induced by DNA-damaging agents. Part of the RAD51 paralog protein complexes BCDX2 and CX3 which act at different stages of the BRCA1-BRCA2-dependent HR pathway. Upon DNA damage, BCDX2 seems to act downstream of BRCA2 recruitment and upstream of RAD51 recruitment; CX3 seems to act downstream of RAD51 recruitment; both complexes bind predominantly to the intersection of the four duplex arms of the Holliday junction (HJ) and to junction of replication forks. The BCDX2 complex was originally reported to bind single-stranded DNA, single-stranded gaps in duplex DNA and specifically to nicks in duplex DNA. The BCDX2 subcomplex RAD51B:RAD51C exhibits single-stranded DNA-dependent ATPase activity suggesting an involvement in early stages of the HR pathway. Involved in RAD51 foci formation in response to DNA damage suggesting an involvement in early stages of HR probably in the invasion step. Has an early function in DNA repair in facilitating phosphorylation of the checkpoint kinase CHEK2 and thereby transduction of the damage signal, leading to cell cycle arrest and HR activation. Participates in branch migration and HJ resolution and thus is important for processing HR intermediates late in the DNA repair process; the function may be linked to the CX3 complex. Part of a PALB2-scaffolded HR complex containing BRCA2 and which is thought to play a role in DNA repair by HR. Protects RAD51 from ubiquitin-mediated degradation that is enhanced following DNA damage. Plays a role in regulating mitochondrial DNA copy number under conditions of oxidative stress in the presence of RAD51 and XRCC3. Contributes to DNA cross-link resistance, sister chromatid cohesion and genomic stability. Involved in maintaining centrosome number in mitosis. This chain is DNA repair protein RAD51 homolog 3 (RAD51C), found in Homo sapiens (Human).